Consider the following 871-residue polypeptide: Valine--tRNA ligase (871 aa).

Residues 47 to 57 (PNVTGRLHIGH) carry the 'HIGH' region motif. A 'KMSKS' region motif is present at residues 534–538 (KMSKS). Lys-537 contributes to the ATP binding site. Positions 805 to 871 (DLTPILNRLN…IEEELARLTR (67 aa)) form a coiled coil.

This sequence belongs to the class-I aminoacyl-tRNA synthetase family. ValS type 1 subfamily. Monomer.

It localises to the cytoplasm. It catalyses the reaction tRNA(Val) + L-valine + ATP = L-valyl-tRNA(Val) + AMP + diphosphate. Catalyzes the attachment of valine to tRNA(Val). As ValRS can inadvertently accommodate and process structurally similar amino acids such as threonine, to avoid such errors, it has a 'posttransfer' editing activity that hydrolyzes mischarged Thr-tRNA(Val) in a tRNA-dependent manner. The protein is Valine--tRNA ligase of Nitratiruptor sp. (strain SB155-2).